The sequence spans 443 residues: Autophagy-related protein 13 homolog (443 aa).

Disordered regions lie at residues 232 to 283 (AKKR…EEDH) and 308 to 333 (ANGT…KEPT). The span at 240–253 (SVESATSAGSSTSR) shows a compositional bias: polar residues. Positions 268–283 (EDSRHSDVQNSYEEDH) are enriched in basic and acidic residues. Positions 308–325 (ANGTKKNSSSTCLNSPKS) are enriched in polar residues.

Belongs to the ATG13 family. Metazoan subfamily. Interacts with unc-51 (via C-terminus). Interacts with lgg-1; the interaction is direct.

The protein localises to the cytoplasm. Its subcellular location is the cytosol. The protein resides in the preautophagosomal structure. It localises to the perikaryon. It is found in the cell projection. The protein localises to the axon. Its function is as follows. Component of the unc-51/atg-13 complex required for autophagosome formation. Required for the degradation of germ cell specific P-granule components such as sepa-1 by autophagy in somatic cells. This ensures exclusive localization of the P-granules in germ cells. May function downstream of the let-363 (Tor) signaling pathway to mediate sepa-1 degradation. Plays a role in survival during limited food availability. The chain is Autophagy-related protein 13 homolog from Caenorhabditis elegans.